A 386-amino-acid chain; its full sequence is Agamous-like MADS-box protein AGL30 (386 aa).

An MADS-box domain is found at 1 to 53 (MGRVKLKIKKLENTNGRQSTFAKRKNGILKKANELSILCDIDIVLLMFSPTGK). Residues 341–360 (PDSSAYNDNTNQTRFGSSSS) form a disordered region. A compositionally biased stretch (polar residues) spans 344 to 356 (SAYNDNTNQTRFG).

Forms heterodimers with AGL66 and AGL104. As to expression, expressed in pollen.

It localises to the nucleus. Functionally, probable transcription factor that forms heterodimers with the MADS-box proteins AGL66 and AGL104 and is involved in the regulation of pollen maturation at the late stages of pollen development and pollen tube growth. The protein is Agamous-like MADS-box protein AGL30 of Arabidopsis thaliana (Mouse-ear cress).